The primary structure comprises 427 residues: Serine--tRNA ligase (427 aa).

An L-serine-binding site is contributed by 231–233 (TAE). Position 262–264 (262–264 (RSE)) interacts with ATP. Residue E285 participates in L-serine binding. 349–352 (EISS) is a binding site for ATP. S385 contacts L-serine.

This sequence belongs to the class-II aminoacyl-tRNA synthetase family. Type-1 seryl-tRNA synthetase subfamily. In terms of assembly, homodimer. The tRNA molecule binds across the dimer.

It is found in the cytoplasm. It carries out the reaction tRNA(Ser) + L-serine + ATP = L-seryl-tRNA(Ser) + AMP + diphosphate + H(+). The catalysed reaction is tRNA(Sec) + L-serine + ATP = L-seryl-tRNA(Sec) + AMP + diphosphate + H(+). It participates in aminoacyl-tRNA biosynthesis; selenocysteinyl-tRNA(Sec) biosynthesis; L-seryl-tRNA(Sec) from L-serine and tRNA(Sec): step 1/1. In terms of biological role, catalyzes the attachment of serine to tRNA(Ser). Is also able to aminoacylate tRNA(Sec) with serine, to form the misacylated tRNA L-seryl-tRNA(Sec), which will be further converted into selenocysteinyl-tRNA(Sec). The polypeptide is Serine--tRNA ligase (Rhizobium etli (strain CIAT 652)).